A 180-amino-acid polypeptide reads, in one-letter code: NADH-quinone oxidoreductase subunit I (180 aa).

2 4Fe-4S ferredoxin-type domains span residues 48 to 80 (IVLT…LQKA) and 90 to 119 (EFFR…LTPD). 8 residues coordinate [4Fe-4S] cluster: cysteine 60, cysteine 63, cysteine 66, cysteine 70, cysteine 99, cysteine 102, cysteine 105, and cysteine 109.

Belongs to the complex I 23 kDa subunit family. In terms of assembly, NDH-1 is composed of 13 different subunits. Subunits NuoA, H, J, K, L, M, N constitute the membrane sector of the complex. [4Fe-4S] cluster serves as cofactor.

It localises to the cell inner membrane. The catalysed reaction is a quinone + NADH + 5 H(+)(in) = a quinol + NAD(+) + 4 H(+)(out). Functionally, NDH-1 shuttles electrons from NADH, via FMN and iron-sulfur (Fe-S) centers, to quinones in the respiratory chain. The immediate electron acceptor for the enzyme in this species is believed to be ubiquinone. Couples the redox reaction to proton translocation (for every two electrons transferred, four hydrogen ions are translocated across the cytoplasmic membrane), and thus conserves the redox energy in a proton gradient. This Cronobacter sakazakii (strain ATCC BAA-894) (Enterobacter sakazakii) protein is NADH-quinone oxidoreductase subunit I.